A 262-amino-acid chain; its full sequence is Acyl-[acyl-carrier-protein]--UDP-N-acetylglucosamine O-acyltransferase (262 aa).

It belongs to the transferase hexapeptide repeat family. LpxA subfamily. Homotrimer.

Its subcellular location is the cytoplasm. It catalyses the reaction a (3R)-hydroxyacyl-[ACP] + UDP-N-acetyl-alpha-D-glucosamine = a UDP-3-O-[(3R)-3-hydroxyacyl]-N-acetyl-alpha-D-glucosamine + holo-[ACP]. It participates in glycolipid biosynthesis; lipid IV(A) biosynthesis; lipid IV(A) from (3R)-3-hydroxytetradecanoyl-[acyl-carrier-protein] and UDP-N-acetyl-alpha-D-glucosamine: step 1/6. In terms of biological role, involved in the biosynthesis of lipid A, a phosphorylated glycolipid that anchors the lipopolysaccharide to the outer membrane of the cell. This Burkholderia orbicola (strain MC0-3) protein is Acyl-[acyl-carrier-protein]--UDP-N-acetylglucosamine O-acyltransferase.